The chain runs to 1776 residues: Signal-induced proliferation-associated 1-like protein 3 (1776 aa).

Disordered stretches follow at residues 41–157 and 240–325; these read AQNG…GRAF and PGAL…EASR. Low complexity predominate over residues 54–69; that stretch reads PAATTTRPSPTTPAMP. Composition is skewed to polar residues over residues 89 to 99 and 112 to 129; these read EQSNPSPSQDT and RNLQ…SSGS. A Phosphoserine modification is found at Ser94. Residues 131–140 are compositionally biased toward basic residues; it reads AFHRLSRRRS. Ser140 carries the post-translational modification Phosphoserine. Residues 257-268 show a composition bias toward polar residues; it reads GQPTKDSLQSLQ. A Phosphoserine modification is found at Ser394. Residues 438 to 461 form a disordered region; it reads SRASVGSPGGSSEAHMAEPTLSTH. Residues 605 to 822 enclose the Rap-GAP domain; it reads LLKLDEQGLC…RTRQEYLKDL (218 aa). The 65-residue stretch at 960-1024 folds into the PDZ domain; that stretch reads DMTLRRNGLG…DQMIDLLRTS (65 aa). 3 disordered regions span residues 1040 to 1104, 1117 to 1164, and 1184 to 1632; these read PRRG…AQSL, RESQ…ATYA, and DPHF…LDPG. Composition is skewed to polar residues over residues 1074-1104 and 1151-1160; these read APWQ…AQSL and PSGSFSTPGS. Low complexity predominate over residues 1190–1201; it reads DGMSSGDSSSGG. Over residues 1239–1255 the composition is skewed to basic and acidic residues; sequence SRQDAAGKDSPNRHSKG. Over residues 1260 to 1275 the composition is skewed to low complexity; sequence SSHSSSNTLSSNASSS. Polar residues predominate over residues 1298-1316; the sequence is GGSSDSGIDTTLYTSSPSC. The span at 1344–1357 shows a compositional bias: basic and acidic residues; that stretch reads SAGRPHPVDRRREV. Ser1358 is subject to Phosphoserine. Thr1381 is subject to Phosphothreonine. Positions 1409-1436 are enriched in polar residues; sequence VYKTASAETPRPSQLSQCSPFQLSTSVP. Lys1442 carries the N6-acetyllysine modification. Residues 1503 to 1512 are compositionally biased toward basic and acidic residues; sequence TIEDDLKKLI. 2 stretches are compositionally biased toward polar residues: residues 1526-1541 and 1566-1578; these read GQSP…SDES and LFTS…SSTL. 2 positions are modified to phosphoserine: Ser1538 and Ser1541. Low complexity predominate over residues 1589 to 1601; it reads PPSGAPSTTPATG. 2 positions are modified to phosphoserine: Ser1614 and Ser1617. The span at 1620–1630 shows a compositional bias: basic and acidic residues; it reads DGRDRPLRRLD. At Ser1672 the chain carries Phosphoserine. The disordered stretch occupies residues 1678 to 1705; that stretch reads AHSPVHSHLSLERGPQTPRATPTMSEES. 2 positions are modified to phosphothreonine: Thr1694 and Thr1698. The stretch at 1715-1769 forms a coiled coil; it reads QLEVMLKQLHTDLQKEKQDKVVLQSEVASLRQNNQRLQEESQAASEQLRKFAELF.

The protein resides in the apical cell membrane. Functionally, plays a critical role in epithelial cell morphogenesis, polarity, adhesion and cytoskeletal organization in the lens. This is Signal-induced proliferation-associated 1-like protein 3 (Sipa1l3) from Mus musculus (Mouse).